An 83-amino-acid chain; its full sequence is Arminin 3b (83 aa).

The signal sequence occupies residues 1–18; it reads MKIVFAILFLTFIALTYA. Residues 19–57 constitute a propeptide that is removed on maturation; that stretch reads RSFEDLKEEIKNEIEKEIFDDLEEESDELDNNVKKFNDA. Serine 80 is subject to Serine amide.

It belongs to the arminin family. As to expression, expressed in entodermal epithelium along the body column.

It localises to the secreted. The protein resides in the target cell membrane. Antimicrobial peptide with a broad-spectrum antimicrobial activity. Keeps its antibacterial activity under a wide range of salt concentrations that mimic physiological conditions of human blood, which is surprising, since Hydra is an obligate freshwater animal with nearly no salt tolerance. Does not affect red blood cells. The protein is Arminin 3b of Hydra vulgaris (Hydra).